Here is a 102-residue protein sequence, read N- to C-terminus: Large ribosomal subunit protein bL21 (102 aa).

It belongs to the bacterial ribosomal protein bL21 family. In terms of assembly, part of the 50S ribosomal subunit. Contacts protein L20.

In terms of biological role, this protein binds to 23S rRNA in the presence of protein L20. The chain is Large ribosomal subunit protein bL21 from Leptospira biflexa serovar Patoc (strain Patoc 1 / Ames).